Reading from the N-terminus, the 125-residue chain is Small ribosomal subunit protein uS12 (125 aa).

Residue Asp-89 is modified to 3-methylthioaspartic acid.

Belongs to the universal ribosomal protein uS12 family. In terms of assembly, part of the 30S ribosomal subunit. Contacts proteins S8 and S17. May interact with IF1 in the 30S initiation complex.

With S4 and S5 plays an important role in translational accuracy. In terms of biological role, interacts with and stabilizes bases of the 16S rRNA that are involved in tRNA selection in the A site and with the mRNA backbone. Located at the interface of the 30S and 50S subunits, it traverses the body of the 30S subunit contacting proteins on the other side and probably holding the rRNA structure together. The combined cluster of proteins S8, S12 and S17 appears to hold together the shoulder and platform of the 30S subunit. The chain is Small ribosomal subunit protein uS12 from Clostridium novyi (strain NT).